Here is a 99-residue protein sequence, read N- to C-terminus: uncharacterized protein (99 aa).

This is an uncharacterized protein from Thermoproteus tenax virus 1 (strain KRA1) (TTV1).